The following is a 294-amino-acid chain: Cytidine deaminase (294 aa).

CMP/dCMP-type deaminase domains are found at residues 48–168 (NDDE…FGPK) and 187–294 (DNTS…RVTL). Residue 89 to 91 (NME) coordinates substrate. His-102 contributes to the Zn(2+) binding site. The Proton donor role is filled by Glu-104. Positions 129 and 132 each coordinate Zn(2+).

Belongs to the cytidine and deoxycytidylate deaminase family. In terms of assembly, homodimer. Requires Zn(2+) as cofactor.

The enzyme catalyses cytidine + H2O + H(+) = uridine + NH4(+). The catalysed reaction is 2'-deoxycytidine + H2O + H(+) = 2'-deoxyuridine + NH4(+). Its function is as follows. This enzyme scavenges exogenous and endogenous cytidine and 2'-deoxycytidine for UMP synthesis. In Proteus mirabilis (strain HI4320), this protein is Cytidine deaminase.